Consider the following 299-residue polypeptide: Taste receptor type 2 member 4 (299 aa).

Residues 1-9 (MLRLFYFSA) are Extracellular-facing. Residues 10-30 (IIASVILNFVGIIMNLFITVV) form a helical membrane-spanning segment. The Cytoplasmic segment spans residues 31-46 (NCKTWVKSHRISSSDR). Residues 47–67 (ILFSLGITRFLMLGLFLVNTI) traverse the membrane as a helical segment. Over 68 to 81 (YFVSSNTERSVYLS) the chain is Extracellular. Residues 82-102 (AFFVLCFMFLDSSSLWFVTLL) form a helical membrane-spanning segment. Over 103 to 131 (NILYCVKITNFQHSVFLLLKRNISPKIPR) the chain is Cytoplasmic. Residues 132-152 (LLLACVLISAFTTCLYITLSQ) traverse the membrane as a helical segment. The Extracellular portion of the chain corresponds to 153 to 172 (ASPFPELVTTRNNTSFNINE). Asn-164 and Asn-165 each carry an N-linked (GlcNAc...) asparagine glycan. Residues 173–193 (GILSLVVSLVLSSSLQFIINV) traverse the membrane as a helical segment. At 194 to 230 (TSASLLIHSLRRHIQKMQKNATGFWNPQTEAHVGAMK) the chain is on the cytoplasmic side. Residues 231–251 (LMVYFLILYIPYSVATLVQYL) form a helical membrane-spanning segment. Topologically, residues 252–262 (PFYAGMDMGTK) are extracellular. A helical transmembrane segment spans residues 263–283 (SICLIFATLYSPGHSVLIIIT). Residues 284 to 299 (HPKLKTTAKKILCFKK) are Cytoplasmic-facing.

Belongs to the G-protein coupled receptor T2R family.

Its subcellular location is the membrane. The protein resides in the cell projection. It is found in the cilium membrane. Functionally, gustducin-coupled receptor implicated in the perception of bitter compounds in the oral cavity and the gastrointestinal tract. Signals through PLCB2 and the calcium-regulated cation channel TRPM5. In airway epithelial cells, binding of denatonium increases the intracellular calcium ion concentration and stimulates ciliary beat frequency. The sequence is that of Taste receptor type 2 member 4 (TAS2R4) from Pan paniscus (Pygmy chimpanzee).